We begin with the raw amino-acid sequence, 406 residues long: Mitochondrial ribosome-associated GTPase 2 (406 aa).

The interval 15–406 (FEGVGHWALS…LGQGRQPLRW (392 aa)) is localized in the mitochondria. The interval 30-406 (KPSRLLPQQA…LGQGRQPLRW (377 aa)) is not localized in the mitochondria. Residues 70 to 224 (RYFVDYRRVL…RVLHLELKTV (155 aa)) form the Obg domain. The OBG-type G domain maps to 225–390 (AHAGMVGFPN…LLLHLKVLYD (166 aa)). GTP-binding positions include 231 to 238 (GFPNAGKS), 256 to 260 (FTTLK), 278 to 281 (DIPG), 345 to 348 (NKID), and 371 to 373 (SAL). Mg(2+)-binding residues include S238 and T258.

This sequence belongs to the TRAFAC class OBG-HflX-like GTPase superfamily. OBG GTPase family. As to quaternary structure, associates with the mitochondrial ribosome large subunit; the association occurs in a GTP-dependent manner. Mg(2+) serves as cofactor.

The protein localises to the mitochondrion. It localises to the mitochondrion inner membrane. In terms of biological role, plays a role in the regulation of the mitochondrial ribosome assembly and of translational activity. Displays GTPase activity. Involved in the ribosome maturation process. In Pongo abelii (Sumatran orangutan), this protein is Mitochondrial ribosome-associated GTPase 2 (MTG2).